The chain runs to 165 residues: Lithostathine (165 aa).

Residues 1–21 (MTRNKYFILLSCLMVLSPSQG) form the signal peptide. A Pyrrolidone carboxylic acid modification is found at glutamine 22. The C-type lectin domain occupies 33 to 163 (ITCPEGSNAY…DAQLSFVCKF (131 aa)). Disulfide bonds link cysteine 35–cysteine 46, cysteine 63–cysteine 161, and cysteine 136–cysteine 153. Residue asparagine 129 is glycosylated (N-linked (GlcNAc...) asparagine).

Expressed only in regenerating islets, but not in normal pancreatic islets, insulinomas or regenerating liver.

It is found in the secreted. In terms of biological role, might act as an inhibitor of spontaneous calcium carbonate precipitation. The chain is Lithostathine (Reg1) from Rattus norvegicus (Rat).